A 127-amino-acid chain; its full sequence is Small ribosomal subunit protein uS13 (127 aa).

The tract at residues 95–127 (GLPVHGQRTSTNARTRKGPRRAAVKKKGGAKKK) is disordered. A compositionally biased stretch (basic residues) spans 108 to 127 (RTRKGPRRAAVKKKGGAKKK).

Belongs to the universal ribosomal protein uS13 family. Part of the 30S ribosomal subunit. Forms a loose heterodimer with protein S19. Forms two bridges to the 50S subunit in the 70S ribosome.

Functionally, located at the top of the head of the 30S subunit, it contacts several helices of the 16S rRNA. In the 70S ribosome it contacts the 23S rRNA (bridge B1a) and protein L5 of the 50S subunit (bridge B1b), connecting the 2 subunits; these bridges are implicated in subunit movement. Contacts the tRNAs in the A and P-sites. The protein is Small ribosomal subunit protein uS13 of Desulfatibacillum aliphaticivorans.